The chain runs to 819 residues: MAPNATTKKRAAAKDDDFVLTLSDDENDVLENGVEEDTLSSSKKRKRDAAEAPKGKNKKQKQLKKSKKGESAAGAVSDDQSGEEDEAEAMDAGEDDGALDSEFEFDVGGNANTGVIEGFDGWEARNGAGPADAPKNGDKKAVDIDDIISRRKAKKEAELKKKQQKEKKRREEEGEEESEDEDADSDGGMSVDFQDDELLAADGFGMGADGADESGDDVENDSNDSDDADEKGSEDEESDDDAAASDNDSVATPVHHPDDEAASDEESEAESEVDAEEAEKRKAFFAPEEKSTAASTSNRSFQDFNLSRPILRGLASVNFTTPTPIQQKTIPVALLGKDIVGSAVTGSGKTAAFVVPILERLLFRPRKVPTSRVAILMPTRELAVQCYNVATKLATHTDITFCQLVGGFSLREQENILKKRPDVIIATPGRFIDHMRNSPSFTVDTLEILVLDEADRMLEDGFADELNEILTTIPQSRQTMLFSATMTDSVDKLIRVGLNRPVRLMVDSKKNTSMNLTQEFVRLRPGREDKRLGYLLYLCNEIYTGRVIVFFRQKREAHRVRIVFGLLGLKAAELHGSMSQEQRIKSVENFREGKVAFLLATDLASRGLDIKGVETVINYEAPQSHEIYLHRVGRTARAGRSGRACTIAAEPDRKIVKSAVKAGKAQGAKIVSRVVDPAVADEWAAKAKGLEDEIEEVLQEEKLEKQMAQAEMQVTKGENMIKHEAEIMSRPKRTWFETERDKRAARKLGATELNGPSKKDKVKLSNKDKKRLDDARQRHEGNIGWKKGKADREAPKQGKNKGSKNKSDKKNNIKMKGKK.

The segment at 1-299 (MAPNATTKKR…KSTAASTSNR (299 aa)) is disordered. Acidic residues predominate over residues 23 to 38 (SDDENDVLENGVEEDT). The segment covering 55-67 (GKNKKQKQLKKSK) has biased composition (basic residues). The span at 80–105 (QSGEEDEAEAMDAGEDDGALDSEFEF) shows a compositional bias: acidic residues. Over residues 135 to 161 (KNGDKKAVDIDDIISRRKAKKEAELKK) the composition is skewed to basic and acidic residues. 3 stretches are compositionally biased toward acidic residues: residues 173 to 185 (EGEE…DADS), 210 to 243 (GADE…DDAA), and 260 to 277 (EAAS…DAEE). Basic and acidic residues predominate over residues 278–291 (AEKRKAFFAPEEKS). Positions 299–327 (RSFQDFNLSRPILRGLASVNFTTPTPIQQ) match the Q motif motif. Residues 330–504 (IPVALLGKDI…RVGLNRPVRL (175 aa)) enclose the Helicase ATP-binding domain. 343 to 350 (AVTGSGKT) is a binding site for ATP. The short motif at 452–455 (DEAD) is the DEAD box element. Residues 531 to 678 (RLGYLLYLCN…KIVSRVVDPA (148 aa)) enclose the Helicase C-terminal domain. Composition is skewed to basic and acidic residues over residues 732–742 (KRTWFETERDK) and 757–781 (SKKD…RHEG). Residues 732–819 (KRTWFETERD…KNNIKMKGKK (88 aa)) form a disordered region.

It belongs to the DEAD box helicase family. DDX27/DRS1 subfamily. Associates with pre-ribosomal particles.

It is found in the nucleus. Its subcellular location is the nucleolus. The enzyme catalyses ATP + H2O = ADP + phosphate + H(+). ATP-binding RNA helicase involved in ribosome assembly. This chain is ATP-dependent RNA helicase drs1 (drs1), found in Neosartorya fischeri (strain ATCC 1020 / DSM 3700 / CBS 544.65 / FGSC A1164 / JCM 1740 / NRRL 181 / WB 181) (Aspergillus fischerianus).